Consider the following 652-residue polypeptide: Bifunctional protein ThiO/ThiG (652 aa).

Residues 1-366 (MTRDIVIIGG…HYSRSQKQAS (366 aa)) are thiO. Residues 5–19 (IVIIGGGVIGLAIAV) and 44–46 (AGM) each bind FAD. A glycine-binding site is contributed by Glu52. FAD is bound at residue Val173. Glycine contacts are provided by Arg301 and Arg327. Residue 325–331 (HYRNGIL) participates in FAD binding. The tract at residues 393–652 (PLIIAGKSFH…ASSPVTGTIS (260 aa)) is thiG. Residue Lys494 is the Schiff-base intermediate with DXP of the active site. 1-deoxy-D-xylulose 5-phosphate is bound by residues Gly555, 581–582 (AG), and 603–604 (NS).

This sequence in the N-terminal section; belongs to the DAO family. ThiO subfamily. It in the C-terminal section; belongs to the ThiG family. Interacts with ThiH and ThiS. FAD is required as a cofactor.

The protein localises to the cytoplasm. The enzyme catalyses glycine + O2 + H2O = glyoxylate + H2O2 + NH4(+). It carries out the reaction [ThiS sulfur-carrier protein]-C-terminal-Gly-aminoethanethioate + 2-iminoacetate + 1-deoxy-D-xylulose 5-phosphate = [ThiS sulfur-carrier protein]-C-terminal Gly-Gly + 2-[(2R,5Z)-2-carboxy-4-methylthiazol-5(2H)-ylidene]ethyl phosphate + 2 H2O + H(+). Its pathway is cofactor biosynthesis; thiamine diphosphate biosynthesis. Catalyzes the FAD-dependent oxidative deamination of glycine. Is essential for thiamine biosynthesis since the oxidation of glycine catalyzed by ThiO generates the glycine imine intermediate (dehydroglycine) required for the biosynthesis of the thiazole ring of thiamine pyrophosphate. In terms of biological role, catalyzes the rearrangement of 1-deoxy-D-xylulose 5-phosphate (DXP) to produce the thiazole phosphate moiety of thiamine. Sulfur is provided by the thiocarboxylate moiety of the carrier protein ThiS. In vitro, sulfur can be provided by H(2)S. The protein is Bifunctional protein ThiO/ThiG (thiO/thiG) of Nostoc sp. (strain PCC 7120 / SAG 25.82 / UTEX 2576).